Here is a 345-residue protein sequence, read N- to C-terminus: Probable glucan endo-1,3-beta-glucosidase BG4 (345 aa).

An N-terminal signal peptide occupies residues 1–22; that stretch reads MLYSPKKLFLFFLSCIVLYVNS. Asn23 and Asn119 each carry an N-linked (GlcNAc...) asparagine glycan. Glu128 acts as the Proton donor in catalysis. Glu267 serves as the catalytic Nucleophile. Residues Asn277 and Asn306 are each glycosylated (N-linked (GlcNAc...) asparagine).

This sequence belongs to the glycosyl hydrolase 17 family.

The protein localises to the secreted. The catalysed reaction is Hydrolysis of (1-&gt;3)-beta-D-glucosidic linkages in (1-&gt;3)-beta-D-glucans.. Its function is as follows. May play a role in plant defense against pathogens. The polypeptide is Probable glucan endo-1,3-beta-glucosidase BG4 (Arabidopsis thaliana (Mouse-ear cress)).